The following is a 69-amino-acid chain: Large ribosomal subunit protein uL29 (69 aa).

The protein belongs to the universal ribosomal protein uL29 family.

The sequence is that of Large ribosomal subunit protein uL29 from Staphylococcus haemolyticus (strain JCSC1435).